A 527-amino-acid polypeptide reads, in one-letter code: Exodeoxyribonuclease 7 large subunit (527 aa).

The segment at 499-527 is disordered; sequence AGEEGAPPPAAPKKRASRPVVPTKQGSLF.

The protein belongs to the XseA family. In terms of assembly, heterooligomer composed of large and small subunits.

The protein resides in the cytoplasm. It carries out the reaction Exonucleolytic cleavage in either 5'- to 3'- or 3'- to 5'-direction to yield nucleoside 5'-phosphates.. Functionally, bidirectionally degrades single-stranded DNA into large acid-insoluble oligonucleotides, which are then degraded further into small acid-soluble oligonucleotides. The polypeptide is Exodeoxyribonuclease 7 large subunit (Sinorhizobium fredii (strain NBRC 101917 / NGR234)).